Reading from the N-terminus, the 507-residue chain is Steroid (22S)-hydroxylase (507 aa).

Residues 12–32 (LLFFLPYILLALLTFYTTTVA) form a helical membrane-spanning segment. Residue cysteine 444 participates in heme binding.

Belongs to the cytochrome P450 family. Heme serves as cofactor.

Its subcellular location is the membrane. The catalysed reaction is a C27-steroid + reduced [NADPH--hemoprotein reductase] + O2 = a (22S)-22-hydroxy C27-steroid + oxidized [NADPH--hemoprotein reductase] + H2O + H(+). It carries out the reaction a C28-steroid + reduced [NADPH--hemoprotein reductase] + O2 = a (22S)-22-hydroxy C28-steroid + oxidized [NADPH--hemoprotein reductase] + H2O + H(+). The enzyme catalyses campesterol + reduced [NADPH--hemoprotein reductase] + O2 = (22S)-22-hydroxycampesterol + oxidized [NADPH--hemoprotein reductase] + H2O + H(+). It catalyses the reaction campestanol + reduced [NADPH--hemoprotein reductase] + O2 = 6-deoxycathasterone + oxidized [NADPH--hemoprotein reductase] + H2O + H(+). Its pathway is plant hormone biosynthesis; brassinosteroid biosynthesis. Involved in reduction steps of the biosynthesis of plant campesterol-derivative steroids, ending to castasterone (CS) but missing brassinolide (BL). Catalyzes the conversion of campesterol (CR) to (22S)-22-hydroxycampesterol (22-OHCR, 22-hydroxyCR) and of campestanol (CN) to 6-deoxycathasterone (6-deoxoCT). The polypeptide is Steroid (22S)-hydroxylase (Brachypodium distachyon (Purple false brome)).